The primary structure comprises 766 residues: MDRRTRENPERTFDLVLKVKCHASENEDPEVLWKFPEDFGDQEVLQSVPKFCFPFDVERVSQNQVGQHFTFVLTDMESKQRFGFCRLTSGGRICLCILSYLPWFEVYYKLLNTLADYLAKELEEDLNETLKSLYNHPVPKANTPVNLSVHSCFITPDITGLPTIPESRNLTEYFVAVDVNNMLRLYASMLHERRIIITSSKLSTLTACLHGSAALLYPMYWQHIYIPVLPPHLLDYCCAPMPYLIGIHSSLIERVKNKSLEDVVVLNVDTNTLESPFNDLSSLPSDVVSALKNKLKKQSTATGDGVARAFLRAQAALFGSYRDALRYKPGEPITFCEESFVKHRSSVMKQFLETAVNLQLFKQFIDGRLAKLNAGRGFSDIFEEEITSGGFCGGSPRSYQQWVYTVKKGGALFNTAVTKATPAVRTAYKFAKSHARLGLKEVKSRLKHKDNEEEYGTCSGLVQYTPVYTLHNEKGENREKHKLSQTHLKRPHKSLDGTLYDDDDDDDDIERASKISSEDGEETRAYFYESDDSVEAQVKAPYSGEMDLLGEILDTLSTHSSDQGKLAPAKSLDFFRSMDDIDYKPTNKSNAPSENNLALLCASGDQGEWNLGQDDSALHGRQLPPSPRKRVSSGGLTESLFILKEESREKPLCADSVSGPTVVGKPAPTSGLRSQPAAPEASQTERGRAEVKQTPGQAPLQSEDLSVPGPGSRQSTFVPWEKAGKEDTKPSKDVGLLQEVVSLCHMSCDFQQDLNISEESRSGNQT.

One can recognise a uDENN domain in the interval 14–143 (DLVLKVKCHA…YNHPVPKANT (130 aa)). Residues 160 to 296 (GLPTIPESRN…VVSALKNKLK (137 aa)) enclose the cDENN domain. One can recognise a dDENN domain in the interval 298-375 (QSTATGDGVA…DGRLAKLNAG (78 aa)). The FXDXF motif signature appears at 378–382 (FSDIF). Positions 472–523 (NEKGENREKHKLSQTHLKRPHKSLDGTLYDDDDDDDDIERASKISSEDGEET) are disordered. The segment covering 480–492 (KHKLSQTHLKRPH) has biased composition (basic residues). Residues 499-509 (LYDDDDDDDDI) are compositionally biased toward acidic residues. Tyr-500 is modified (phosphotyrosine). A phosphoserine mark is found at Ser-516, Ser-517, Ser-530, and Ser-533. A Clathrin box motif is present at residues 547–556 (DLLGEILDTL). 2 disordered regions span residues 611-634 (LGQDDSALHGRQLPPSPRKRVSSG) and 652-732 (LCAD…KPSK). Phosphoserine occurs at positions 632 and 633. Residues 694–704 (TPGQAPLQSED) are compositionally biased toward polar residues. Residues 722-732 (KAGKEDTKPSK) are compositionally biased toward basic and acidic residues.

Interacts with RAB35. Interacts with clathrin heavy chain/CLTC. Interacts with components of the adapter protein complex 2 (AP-2) AP2A2 and AP2B1. Interacts with CD3E. Post-translationally, phosphorylated on serine and/or threonine, possibly regulating the guanine nucleotide exchange factor (GEF) activity. Expressed in a subset of dendritic cells (DCs).

The protein resides in the cytoplasm. The protein localises to the cytosol. It is found in the cytoplasmic vesicle. It localises to the clathrin-coated vesicle. In terms of biological role, guanine nucleotide exchange factor (GEF) for RAB35 that acts as a regulator of T-cell receptor (TCR) internalization in TH2 cells. Acts by promoting the exchange of GDP to GTP, converting inactive GDP-bound RAB35 into its active GTP-bound form. Plays a role in clathrin-mediated endocytosis. Controls cytokine production in TH2 lymphocytes by controlling the rate of TCR internalization and routing to endosomes: acts by mediating clathrin-mediated endocytosis of TCR via its interaction with the adapter protein complex 2 (AP-2) and GEF activity. Dysregulation leads to impaired TCR down-modulation and recycling, affecting cytokine production in TH2 cells. This is DENN domain-containing protein 1B from Mus musculus (Mouse).